A 1058-amino-acid chain; its full sequence is Structural maintenance of chromosomes protein 6A (1058 aa).

Residues 23-1049 enclose the Zinc-hook domain; the sequence is ILRIRLENFM…SMVKSHEKIK (1027 aa). 50–57 contributes to the ATP binding site; sequence GQNGSGKS. The stretch at 136–449 forms a coiled coil; the sequence is KISSRKEELR…NDLKKHQTNK (314 aa). Positions 450-633 are flexible hinge; sequence VTAFGGDKVI…PPRPRRPTRL (184 aa). A coiled-coil region spans residues 634–927; that stretch reads CASFDDQIKD…RNKDLLKREL (294 aa).

This sequence belongs to the SMC family. SMC6 subfamily. As to quaternary structure, forms a heterodimer with SMC5. The SMC5-SMC6 complex is composed of the SMC5 and SMC6 heterodimer attached via their hinge domain and from the non-SMC subunit NSE4A or NSE4B. Expressed in seedlings, rosette leaves and floral buds.

Its subcellular location is the nucleus. It localises to the chromosome. In terms of biological role, core component of the SMC5-SMC6 complex that promotes sister chromatid alignment after DNA damage and facilitates double-stranded DNA breaks (DSBs) repair via homologous recombination between sister chromatids. The chain is Structural maintenance of chromosomes protein 6A (SMC6A) from Arabidopsis thaliana (Mouse-ear cress).